The sequence spans 352 residues: C-C chemokine receptor type 5 (352 aa).

At 1–30 the chain is on the extracellular side; sequence MDYQVSSPTYDIDYYTSEPCQKINVKQIAA. Sulfotyrosine is present on Y3. O-linked (GalNAc...) serine glycans are attached at residues S6 and S7. 3 positions are modified to sulfotyrosine: Y10, Y14, and Y15. Cystine bridges form between C20–C269 and C101–C178. The helical transmembrane segment at 31–58 threads the bilayer; it reads RLLPPLYSLVFIFGFVGNILVVLILINC. At 59–68 the chain is on the cytoplasmic side; it reads KRLKSMTDIY. A helical membrane pass occupies residues 69–89; that stretch reads LLNLAISDLLFLLTVPFWAHY. The Extracellular segment spans residues 90–102; the sequence is AAAQWDFGNTMCQ. Residues 103–124 form a helical membrane-spanning segment; sequence LLTGLYFIGFFSGIFFIILLTI. At 125–141 the chain is on the cytoplasmic side; the sequence is DRYLAIVHAVFALKART. A helical transmembrane segment spans residues 142–166; that stretch reads VTFGVVTSVITWVVAVFASLPGIIF. The Extracellular segment spans residues 167 to 198; it reads TRSQREGLHYTCSSHFPYSQYQFWKNFQTLKI. Residues 199-218 traverse the membrane as a helical segment; the sequence is VILGLVLPLLVMVICYSGIL. Over 219–235 the chain is Cytoplasmic; the sequence is KTLLRCRNEKKRHRAVR. Residues 236 to 260 form a helical membrane-spanning segment; the sequence is LIFTIMIVYFLFWAPYNIVLLLNTF. The Extracellular portion of the chain corresponds to 261–277; it reads QEFFGLNNCSSSNRLDQ. A helical membrane pass occupies residues 278-301; sequence AMQVTETLGMTHCCINPIIYAFVG. Over 302-352 the chain is Cytoplasmic; that stretch reads EKFRNYLLVFFQKHIAKRFCKCCSIFQQEAPERASSVYTRSTGEQEISVGL. S-palmitoyl cysteine attachment occurs at residues C321, C323, and C324. S336, S337, S342, and S349 each carry phosphoserine; by BARK1.

This sequence belongs to the G-protein coupled receptor 1 family. Interacts with PRAF2. Efficient ligand binding to CCL3/MIP-1alpha and CCL4/MIP-1beta requires sulfation, O-glycosylation and sialic acid modifications. Glycosylation on Ser-6 is required for efficient binding of CCL4. Interacts with GRK2. Interacts with ARRB1 and ARRB2. Interacts with CNIH4. Interacts with S100A4; this interaction stimulates T-lymphocyte chemotaxis. Sulfated on at least 2 of the N-terminal tyrosines. Sulfation is required for efficient binding of the chemokines, CCL3 and CCL4. In terms of processing, palmitoylation in the C-terminal is important for cell surface expression. Post-translationally, phosphorylation on serine residues in the C-terminal is stimulated by binding CC chemokines especially by APO-RANTES. O-glycosylated, but not N-glycosylated. Ser-6 appears to be the major site even if Ser-7 may be also O-glycosylated. Also sialylated glycans present which contribute to chemokine binding. Thr-16 and Ser-17 may also be glycosylated and, if so, with small moieties such as a T-antigen.

Its subcellular location is the cell membrane. In terms of biological role, receptor for a number of inflammatory CC-chemokines including CCL3/MIP-1-alpha, CCL4/MIP-1-beta and RANTES and subsequently transduces a signal by increasing the intracellular calcium ion level. May play a role in the control of granulocytic lineage proliferation or differentiation. Participates in T-lymphocyte migration to the infection site by acting as a chemotactic receptor. The protein is C-C chemokine receptor type 5 (CCR5) of Papio anubis (Olive baboon).